We begin with the raw amino-acid sequence, 762 residues long: Coleoptile phototropism protein 1 (762 aa).

A compositionally biased stretch (basic and acidic residues) spans 1-12; the sequence is MWESESESHGGE. The segment at 1 to 29 is disordered; the sequence is MWESESESHGGERGLVPVGGGGGSGRHEA. One can recognise a BTB domain in the interval 51 to 128; sequence SDLLVKVGDV…SYGMAVDLTA (78 aa). A compositionally biased stretch (gly residues) spans 227-238; it reads PAAIRGGGGSGG. Disordered stretches follow at residues 227-264, 460-495, 687-718, and 731-762; these read PAAIRGGGGSGGTASPRWNVGGGGGGESKESSPSRQAV, MAVASSPGRGDPPPPPQPEYYSGRMPPSSAAAASAS, QVDGRGGGAPSPAAAKIGKQQQQGTSASAWSS, and GADAAAGGGVAPPGGGEAAARKGPRRWRNSIS. The NPH3 domain maps to 268-607; the sequence is DWWFEDVSVL…VQVLFTEQVK (340 aa). The stretch at 654 to 691 forms a coiled coil; sequence AAAKKDINTLKFELESMKAKYLELQHEMDALQKQVDGR. Residues 696–709 are compositionally biased toward low complexity; that stretch reads PSPAAAKIGKQQQQ. Residues 736–747 are compositionally biased toward gly residues; that stretch reads AGGGVAPPGGGE. Positions 752 to 762 are enriched in basic residues; it reads KGPRRWRNSIS.

It belongs to the NPH3 family.

The protein operates within protein modification; protein ubiquitination. Its function is as follows. May act as a substrate-specific adapter of an E3 ubiquitin-protein ligase complex (CUL3-RBX1-BTB) which mediates the ubiquitination and subsequent proteasomal degradation of target proteins. Plays a role as signal transduction component in coleoptile phototropism and lateral translocation of auxin. The polypeptide is Coleoptile phototropism protein 1 (CPT1) (Oryza sativa subsp. japonica (Rice)).